The following is a 295-amino-acid chain: Small ribosomal subunit protein uS2 (295 aa).

The tract at residues 242–295 is disordered; that stretch reads APVEPTLARELAPEAPAPEAPAEEAPAAEAAPAAEAAPAAEAAPAEASSEEQAG. Over residues 264-288 the composition is skewed to low complexity; sequence EEAPAAEAAPAAEAAPAAEAAPAEA.

It belongs to the universal ribosomal protein uS2 family.

This Phenylobacterium zucineum (strain HLK1) protein is Small ribosomal subunit protein uS2.